We begin with the raw amino-acid sequence, 282 residues long: Phosphatidylserine decarboxylase proenzyme (282 aa).

Residues Asp88, His144, and Ser247 each act as charge relay system; for autoendoproteolytic cleavage activity in the active site. Ser247 (schiff-base intermediate with substrate; via pyruvic acid; for decarboxylase activity) is an active-site residue. Ser247 carries the pyruvic acid (Ser); by autocatalysis modification.

This sequence belongs to the phosphatidylserine decarboxylase family. PSD-B subfamily. Prokaryotic type I sub-subfamily. As to quaternary structure, heterodimer of a large membrane-associated beta subunit and a small pyruvoyl-containing alpha subunit. Pyruvate is required as a cofactor. Post-translationally, is synthesized initially as an inactive proenzyme. Formation of the active enzyme involves a self-maturation process in which the active site pyruvoyl group is generated from an internal serine residue via an autocatalytic post-translational modification. Two non-identical subunits are generated from the proenzyme in this reaction, and the pyruvate is formed at the N-terminus of the alpha chain, which is derived from the carboxyl end of the proenzyme. The autoendoproteolytic cleavage occurs by a canonical serine protease mechanism, in which the side chain hydroxyl group of the serine supplies its oxygen atom to form the C-terminus of the beta chain, while the remainder of the serine residue undergoes an oxidative deamination to produce ammonia and the pyruvoyl prosthetic group on the alpha chain. During this reaction, the Ser that is part of the protease active site of the proenzyme becomes the pyruvoyl prosthetic group, which constitutes an essential element of the active site of the mature decarboxylase.

Its subcellular location is the cell membrane. The catalysed reaction is a 1,2-diacyl-sn-glycero-3-phospho-L-serine + H(+) = a 1,2-diacyl-sn-glycero-3-phosphoethanolamine + CO2. Its pathway is phospholipid metabolism; phosphatidylethanolamine biosynthesis; phosphatidylethanolamine from CDP-diacylglycerol: step 2/2. In terms of biological role, catalyzes the formation of phosphatidylethanolamine (PtdEtn) from phosphatidylserine (PtdSer). In Xanthomonas oryzae pv. oryzae (strain KACC10331 / KXO85), this protein is Phosphatidylserine decarboxylase proenzyme.